We begin with the raw amino-acid sequence, 89 residues long: Small ribosomal subunit protein uS14A (89 aa).

The protein belongs to the universal ribosomal protein uS14 family. Part of the 30S ribosomal subunit. Contacts proteins S3 and S10.

Functionally, binds 16S rRNA, required for the assembly of 30S particles and may also be responsible for determining the conformation of the 16S rRNA at the A site. The sequence is that of Small ribosomal subunit protein uS14A from Listeria monocytogenes serovar 1/2a (strain ATCC BAA-679 / EGD-e).